Here is a 244-residue protein sequence, read N- to C-terminus: NAD reductase coq12 (244 aa).

Positions 131-158 (NPLMNSEKNSTSVEDLPGSNRTQQTSSH) are disordered. Polar residues predominate over residues 132–158 (PLMNSEKNSTSVEDLPGSNRTQQTSSH).

Its subcellular location is the mitochondrion. It carries out the reaction a reduced flavin + NAD(+) = an oxidized flavin + NADH + 2 H(+). In terms of biological role, NADH-dependent flavin reductase that acts in the coenzyme Q biosynthetic pathway. Required for synthesis of the p-hydroxybenzoic acid (PHB) precursor to form a quinone backbone. The sequence is that of NAD reductase coq12 from Schizosaccharomyces pombe (strain 972 / ATCC 24843) (Fission yeast).